We begin with the raw amino-acid sequence, 336 residues long: tRNA N6-adenosine threonylcarbamoyltransferase (336 aa).

Residues His114 and His118 each coordinate Fe cation. Substrate is bound by residues 136–140 (LVSGG), Asp169, Gly182, Asp186, and Asn275. Asp301 contributes to the Fe cation binding site.

The protein belongs to the KAE1 / TsaD family. Fe(2+) is required as a cofactor.

The protein localises to the cytoplasm. It carries out the reaction L-threonylcarbamoyladenylate + adenosine(37) in tRNA = N(6)-L-threonylcarbamoyladenosine(37) in tRNA + AMP + H(+). Its function is as follows. Required for the formation of a threonylcarbamoyl group on adenosine at position 37 (t(6)A37) in tRNAs that read codons beginning with adenine. Is involved in the transfer of the threonylcarbamoyl moiety of threonylcarbamoyl-AMP (TC-AMP) to the N6 group of A37, together with TsaE and TsaB. TsaD likely plays a direct catalytic role in this reaction. The chain is tRNA N6-adenosine threonylcarbamoyltransferase from Streptococcus gordonii (strain Challis / ATCC 35105 / BCRC 15272 / CH1 / DL1 / V288).